A 216-amino-acid chain; its full sequence is 7-carboxy-7-deazaguanine synthase (216 aa).

Residues 12 to 14 (LQG) and R27 each bind substrate. One can recognise a Radical SAM core domain in the interval 18–216 (RAGRAAVFCR…LQTHKYLGIP (199 aa)). 3 residues coordinate [4Fe-4S] cluster: C31, C46, and C49. Mg(2+) is bound at residue T51. T93 serves as a coordination point for substrate. S-adenosyl-L-methionine is bound by residues G95, 136–138 (SPK), and 176–179 (QPRD). P216 is a substrate binding site.

This sequence belongs to the radical SAM superfamily. 7-carboxy-7-deazaguanine synthase family. Homodimer. It depends on [4Fe-4S] cluster as a cofactor. Requires S-adenosyl-L-methionine as cofactor. The cofactor is Mg(2+).

It catalyses the reaction 6-carboxy-5,6,7,8-tetrahydropterin + H(+) = 7-carboxy-7-deazaguanine + NH4(+). Its pathway is purine metabolism; 7-cyano-7-deazaguanine biosynthesis. Functionally, catalyzes the complex heterocyclic radical-mediated conversion of 6-carboxy-5,6,7,8-tetrahydropterin (CPH4) to 7-carboxy-7-deazaguanine (CDG), a step common to the biosynthetic pathways of all 7-deazapurine-containing compounds. In Nitratidesulfovibrio vulgaris (strain ATCC 29579 / DSM 644 / CCUG 34227 / NCIMB 8303 / VKM B-1760 / Hildenborough) (Desulfovibrio vulgaris), this protein is 7-carboxy-7-deazaguanine synthase.